Here is a 129-residue protein sequence, read N- to C-terminus: Cytochrome c oxidase subunit 5B, mitochondrial (129 aa).

Residues 1–31 (MASRLLRGAGTLAAQALRARGPSGAAAMRSM) constitute a mitochondrion transit peptide. 2 positions are modified to N6-acetyllysine: lysine 68 and lysine 86. Residues cysteine 91, cysteine 93, cysteine 113, and cysteine 116 each contribute to the Zn(2+) site. Lysine 121 carries the post-translational modification N6-acetyllysine.

Belongs to the cytochrome c oxidase subunit 5B family. In terms of assembly, component of the cytochrome c oxidase (complex IV, CIV), a multisubunit enzyme composed of 14 subunits. The complex is composed of a catalytic core of 3 subunits MT-CO1, MT-CO2 and MT-CO3, encoded in the mitochondrial DNA, and 11 supernumerary subunits COX4I1 (or COX4I2), COX5A, COX5B, COX6A1 (or COX6A2), COX6B1 (or COX6B2), COX6C, COX7A2 (or COX7A1), COX7B, COX7C, COX8A and NDUFA4, which are encoded in the nuclear genome. The complex exists as a monomer or a dimer and forms supercomplexes (SCs) in the inner mitochondrial membrane with NADH-ubiquinone oxidoreductase (complex I, CI) and ubiquinol-cytochrome c oxidoreductase (cytochrome b-c1 complex, complex III, CIII), resulting in different assemblies (supercomplex SCI(1)III(2)IV(1) and megacomplex MCI(2)III(2)IV(2)).

The protein resides in the mitochondrion inner membrane. Its pathway is energy metabolism; oxidative phosphorylation. Its function is as follows. Component of the cytochrome c oxidase, the last enzyme in the mitochondrial electron transport chain which drives oxidative phosphorylation. The respiratory chain contains 3 multisubunit complexes succinate dehydrogenase (complex II, CII), ubiquinol-cytochrome c oxidoreductase (cytochrome b-c1 complex, complex III, CIII) and cytochrome c oxidase (complex IV, CIV), that cooperate to transfer electrons derived from NADH and succinate to molecular oxygen, creating an electrochemical gradient over the inner membrane that drives transmembrane transport and the ATP synthase. Cytochrome c oxidase is the component of the respiratory chain that catalyzes the reduction of oxygen to water. Electrons originating from reduced cytochrome c in the intermembrane space (IMS) are transferred via the dinuclear copper A center (CU(A)) of subunit 2 and heme A of subunit 1 to the active site in subunit 1, a binuclear center (BNC) formed by heme A3 and copper B (CU(B)). The BNC reduces molecular oxygen to 2 water molecules using 4 electrons from cytochrome c in the IMS and 4 protons from the mitochondrial matrix. This is Cytochrome c oxidase subunit 5B, mitochondrial (COX5B) from Homo sapiens (Human).